Reading from the N-terminus, the 290-residue chain is Acetyl-coenzyme A carboxylase carboxyl transferase subunit beta (290 aa).

One can recognise a CoA carboxyltransferase N-terminal domain in the interval 27–290 (LWHKCPSCEA…FTHSPSPVSA (264 aa)). Zn(2+)-binding residues include C31, C34, C50, and C53. The segment at 31–53 (CPSCEAVLYRPELEKTLDVCPKC) adopts a C4-type zinc-finger fold.

It belongs to the AccD/PCCB family. In terms of assembly, acetyl-CoA carboxylase is a heterohexamer composed of biotin carboxyl carrier protein (AccB), biotin carboxylase (AccC) and two subunits each of ACCase subunit alpha (AccA) and ACCase subunit beta (AccD). The cofactor is Zn(2+).

The protein localises to the cytoplasm. The enzyme catalyses N(6)-carboxybiotinyl-L-lysyl-[protein] + acetyl-CoA = N(6)-biotinyl-L-lysyl-[protein] + malonyl-CoA. It participates in lipid metabolism; malonyl-CoA biosynthesis; malonyl-CoA from acetyl-CoA: step 1/1. Functionally, component of the acetyl coenzyme A carboxylase (ACC) complex. Biotin carboxylase (BC) catalyzes the carboxylation of biotin on its carrier protein (BCCP) and then the CO(2) group is transferred by the transcarboxylase to acetyl-CoA to form malonyl-CoA. This chain is Acetyl-coenzyme A carboxylase carboxyl transferase subunit beta, found in Pseudomonas aeruginosa (strain UCBPP-PA14).